Here is a 378-residue protein sequence, read N- to C-terminus: 1-acyl-sn-glycerol-3-phosphate acyltransferase delta (378 aa).

A helical transmembrane segment spans residues 11–31; the sequence is FLCHLIFCYVFIVSGLIINTI. Residues 96 to 101 carry the HXXXXD motif motif; it reads HKFEID. 3 consecutive transmembrane segments (helical) span residues 125–145, 307–327, and 338–358; these read ELAY…VFCT, TLVN…RFVI, and LASF…MIGV.

This sequence belongs to the 1-acyl-sn-glycerol-3-phosphate acyltransferase family.

The protein localises to the endoplasmic reticulum membrane. The catalysed reaction is a 1-acyl-sn-glycero-3-phosphate + an acyl-CoA = a 1,2-diacyl-sn-glycero-3-phosphate + CoA. It catalyses the reaction (4Z,7Z,10Z,13Z,16Z,19Z)-docosahexaenoyl-CoA + 1-hexadecanoyl-sn-glycero-3-phosphate = 1-hexadecanoyl-2-(4Z,7Z,10Z,13Z,16Z,19Z-docosahexaenoyl)-sn-glycero-3-phosphate + CoA. The enzyme catalyses 1-octadecanoyl-sn-glycero-3-phosphate + (9Z,12Z)-octadecadienoyl-CoA = 1-octadecanoyl-2-(9Z,12Z-octadecadienoyl)-sn-glycero-3-phosphate + CoA. It carries out the reaction 1-octadecanoyl-sn-glycero-3-phosphate + (4Z,7Z,10Z,13Z,16Z,19Z)-docosahexaenoyl-CoA = 1-octadecanoyl-2-(4Z,7Z,10Z,13Z,16Z,19Z-docosahexaenoyl)-sn-glycero-3-phosphate + CoA. The catalysed reaction is (4Z,7Z,10Z,13Z,16Z,19Z)-docosahexaenoyl-CoA + 1-(9Z-octadecenoyl)-sn-glycero-3-phosphate = 1-(9Z-octadecenoyl)-2-(4Z,7Z,10Z,13Z,16Z,19Z-docosahexaenoyl)-sn-glycero-3-phosphate + CoA. Its pathway is phospholipid metabolism; CDP-diacylglycerol biosynthesis; CDP-diacylglycerol from sn-glycerol 3-phosphate: step 2/3. Functionally, converts 1-acyl-sn-glycerol-3-phosphate (lysophosphatidic acid or LPA) into 1,2-diacyl-sn-glycerol-3-phosphate (phosphatidic acid or PA) by incorporating an acyl moiety at the sn-2 position of the glycerol backbone. Exhibits high acyl-CoA specificity for polyunsaturated fatty acyl-CoA, especially docosahexaenoyl-CoA (22:6-CoA, DHA-CoA). The sequence is that of 1-acyl-sn-glycerol-3-phosphate acyltransferase delta (AGPAT4) from Bos taurus (Bovine).